The following is a 235-amino-acid chain: Regulator of G-protein signaling 18 (235 aa).

Ser49 is modified (phosphoserine). The region spanning 86–202 (SFDKLLSHRD…LKSETYLHLI (117 aa)) is the RGS domain. Ser216 and Ser218 each carry phosphoserine.

As to expression, expressed in bone marrow, spleen, fetal liver and lung. At very low levels expressed in heart.

The protein resides in the cytoplasm. Functionally, inhibits signal transduction by increasing the GTPase activity of G protein alpha subunits thereby driving them into their inactive GDP-bound form. Binds to G(i) alpha-1, G(i) alpha-2, G(i) alpha-3 and G(q) alpha. The polypeptide is Regulator of G-protein signaling 18 (Rgs18) (Mus musculus (Mouse)).